The chain runs to 330 residues: Neurogenic differentiation factor 4 (330 aa).

The disordered stretch occupies residues 1 to 79 (MTKTYTKAKE…RGPKKKKMTK (79 aa)). A compositionally biased stretch (basic and acidic residues) spans 25 to 35 (LSSKDELKAEN). Acidic residues predominate over residues 52–64 (DSIEEEEEEEDDG). Residues 67–79 (PKRRGPKKKKMTK) are compositionally biased toward basic residues. A Nuclear localization signal motif is present at residues 73–79 (KKKKMTK). Residues 87 to 139 (ARRVKANARERTRMHGLNDALDNLRRVMPCYSKTQKLSKIETLRLARNYIWAL) enclose the bHLH domain. The segment at 162-183 (LSQPTSNLVAGCLQLGPQTLFL) is leucine-zipper.

Efficient DNA binding requires dimerization with another bHLH protein. Serine or threonine phosphorylation within the basic region may regulate neurogenic activity. Expressed in both the developing central nervous system and peripheral nervous system.

The protein resides in the nucleus. Probably acts as a transcriptional activator. Mediates neuronal differentiation. Required for the regulation of amacrine cell fate specification in the retina. The polypeptide is Neurogenic differentiation factor 4 (NEUROD4) (Gallus gallus (Chicken)).